We begin with the raw amino-acid sequence, 345 residues long: MVHNKNNTILKMIKGEETSHTPVWFMRQAGRSQPEYRKLKEKYSLFDITHQPELCAYVTHLPVDNYHTDAAILYKDIMTPLKPIGVDVEIKSGIGPVIHNPIKTIQDVEKLSQIDPERDVPYVLDTIKLLTEEKLNVPLIGFTGAPFTLASYMIEGGPSKNYNFTKAMMYRDEATWFALMNHLVDVSVKYVTAQVEAGAELIQIFDSWVGALNVEDYRRYIKPHMIRLISEVKGKHDVPVILFGVGASHLINEWNDLPIDVLGLDWRTSINQAQQLGVTKTLQGNLDPSILLAPWNVIEERLKPILDQGMENGKHIFNLGHGVFPEVQPETLRKVSEFVHTYTQR.

Residues 27-31, phenylalanine 46, aspartate 76, tyrosine 152, serine 207, and histidine 321 each bind substrate; that span reads RQAGR.

This sequence belongs to the uroporphyrinogen decarboxylase family. In terms of assembly, homodimer.

The protein localises to the cytoplasm. It carries out the reaction uroporphyrinogen III + 4 H(+) = coproporphyrinogen III + 4 CO2. Its pathway is porphyrin-containing compound metabolism; protoporphyrin-IX biosynthesis; coproporphyrinogen-III from 5-aminolevulinate: step 4/4. In terms of biological role, catalyzes the decarboxylation of four acetate groups of uroporphyrinogen-III to yield coproporphyrinogen-III. This is Uroporphyrinogen decarboxylase from Staphylococcus aureus (strain USA300 / TCH1516).